The primary structure comprises 387 residues: Galactokinase (387 aa).

33-36 (EHTD) serves as a coordination point for substrate. ATP is bound by residues Ser-67 and 124–130 (GAGLSSS). Ser-130 and Glu-162 together coordinate Mg(2+). The Proton acceptor role is filled by Asp-174. Tyr-224 is a substrate binding site.

It belongs to the GHMP kinase family. GalK subfamily.

The protein resides in the cytoplasm. The catalysed reaction is alpha-D-galactose + ATP = alpha-D-galactose 1-phosphate + ADP + H(+). The protein operates within carbohydrate metabolism; galactose metabolism. Catalyzes the transfer of the gamma-phosphate of ATP to D-galactose to form alpha-D-galactose-1-phosphate (Gal-1-P). The polypeptide is Galactokinase (Lactiplantibacillus plantarum (strain ATCC BAA-793 / NCIMB 8826 / WCFS1) (Lactobacillus plantarum)).